The following is a 729-amino-acid chain: Triadin (729 aa).

Residues 1–28 (MTEITAEGNASTTTTVIDSKNGSVPKSP) form a disordered region. At 1–47 (MTEITAEGNASTTTTVIDSKNGSVPKSPGKVLKRTVTEDIVTTFSSP) the chain is on the cytoplasmic side. Residues 8-24 (GNASTTTTVIDSKNGSV) are compositionally biased toward polar residues. Residues 48–68 (AAWLLVIALIITWSAVAIVMF) traverse the membrane as a helical segment. At 69–729 (DLVDYKNFSA…NSPGQKQQGQ (661 aa)) the chain is on the lumenal side. Residue N75 is glycosylated (N-linked (GlcNAc...) asparagine). The segment covering 117–129 (EDEEDDDGDEDTD) has biased composition (acidic residues). Disordered regions lie at residues 117–265 (EDEE…EQKD), 281–682 (DLKP…PTKQ), and 705–729 (PFTP…QQGQ). Basic and acidic residues-rich tracts occupy residues 130 to 265 (KGEI…EQKD), 309 to 357 (LEEK…KASE), 371 to 433 (AKKD…KEEI), 444 to 509 (GKKE…EVKP), 516 to 531 (GKKE…KEAK), 538 to 562 (VQIH…EKVL), 580 to 598 (KKAE…DKPK), and 609 to 674 (ESGK…KEGT). Residue N647 is glycosylated (N-linked (GlcNAc...) asparagine). Residues 715-729 (SSGQANSPGQKQQGQ) show a composition bias toward polar residues.

In terms of assembly, homooligomer of variable subunit number; disulfide-linked. Interacts with CASQ1 and RYR1 in skeletal muscle. Interacts with CASQ2. Post-translationally, phosphorylated by CaMK2. N-glycosylated.

The protein resides in the cell membrane. Its subcellular location is the sarcoplasmic reticulum membrane. In terms of biological role, contributes to the regulation of lumenal Ca2+ release via the sarcoplasmic reticulum calcium release channels RYR1 and RYR2, a key step in triggering skeletal and heart muscle contraction. Required for normal organization of the triad junction, where T-tubules and the sarcoplasmic reticulum terminal cisternae are in close contact. Required for normal skeletal muscle strength. Plays a role in excitation-contraction coupling in the heart and in regulating the rate of heart beats. This Homo sapiens (Human) protein is Triadin (TRDN).